Reading from the N-terminus, the 431-residue chain is Cleavage stimulation factor subunit 1 (431 aa).

Positions 14–35 (LYKLIISQLLYDGYISIANGLI) are hydrophobic. WD repeat units follow at residues 106 to 145 (SHKG…AKSA), 171 to 210 (DHVD…AKRA), 215 to 254 (QEAE…CFVS), 260 to 301 (QHTD…TTFE), 303 to 343 (AHDG…TLVR), and 395 to 430 (GHNN…RSTT).

Homodimer. The CSTF complex is composed of CSTF1 (50 kDa subunit), CSTF2 (64 kDa subunit) and CSTF3 (77 kDa subunit). Interacts (via repeats WD) directly with CSTF3. Interacts (via repeat WD6) with BARD1. Interacts with ERCC6. The N-terminus is blocked.

The protein localises to the nucleus. Its function is as follows. One of the multiple factors required for polyadenylation and 3'-end cleavage of mammalian pre-mRNAs. May be responsible for the interaction of CSTF with other factors to form a stable complex on the pre-mRNA. The sequence is that of Cleavage stimulation factor subunit 1 (CSTF1) from Homo sapiens (Human).